The sequence spans 677 residues: UvrABC system protein B (677 aa).

In terms of domain architecture, Helicase ATP-binding spans 25 to 412; sequence DGVNSGREYQ…SGAIIEQVIR (388 aa). 38 to 45 lines the ATP pocket; sequence GATGTGKT. Positions 91–114 match the Beta-hairpin motif; it reads YYDYYQPEAYVPVSDTYIAKTSSI. One can recognise a Helicase C-terminal domain in the interval 429-591; that stretch reads QVEDLLDEIR…IVPMPAGKKA (163 aa). Residues 639-674 enclose the UVR domain; sequence PQLIDELETKMKKSAKDLDFENAAKLRDKIHQLRKK.

It belongs to the UvrB family. As to quaternary structure, forms a heterotetramer with UvrA during the search for lesions. Interacts with UvrC in an incision complex.

It is found in the cytoplasm. In terms of biological role, the UvrABC repair system catalyzes the recognition and processing of DNA lesions. A damage recognition complex composed of 2 UvrA and 2 UvrB subunits scans DNA for abnormalities. Upon binding of the UvrA(2)B(2) complex to a putative damaged site, the DNA wraps around one UvrB monomer. DNA wrap is dependent on ATP binding by UvrB and probably causes local melting of the DNA helix, facilitating insertion of UvrB beta-hairpin between the DNA strands. Then UvrB probes one DNA strand for the presence of a lesion. If a lesion is found the UvrA subunits dissociate and the UvrB-DNA preincision complex is formed. This complex is subsequently bound by UvrC and the second UvrB is released. If no lesion is found, the DNA wraps around the other UvrB subunit that will check the other stand for damage. The sequence is that of UvrABC system protein B from Prochlorococcus marinus (strain SARG / CCMP1375 / SS120).